The following is a 443-amino-acid chain: D-serine dehydratase (443 aa).

The residue at position 118 (Lys118) is an N6-(pyridoxal phosphate)lysine.

It belongs to the serine/threonine dehydratase family. DsdA subfamily. In terms of assembly, monomer. Pyridoxal 5'-phosphate is required as a cofactor.

The enzyme catalyses D-serine = pyruvate + NH4(+). This chain is D-serine dehydratase, found in Yersinia enterocolitica serotype O:8 / biotype 1B (strain NCTC 13174 / 8081).